Here is a 338-residue protein sequence, read N- to C-terminus: Lipoate-protein ligase A (338 aa).

The 188-residue stretch at P29–V216 folds into the BPL/LPL catalytic domain. Residues R71, G76–F79, and K134 contribute to the ATP site. Position 134 (K134) interacts with (R)-lipoate.

The protein belongs to the LplA family. As to quaternary structure, monomer.

It is found in the cytoplasm. It carries out the reaction L-lysyl-[lipoyl-carrier protein] + (R)-lipoate + ATP = N(6)-[(R)-lipoyl]-L-lysyl-[lipoyl-carrier protein] + AMP + diphosphate + H(+). Its pathway is protein modification; protein lipoylation via exogenous pathway; protein N(6)-(lipoyl)lysine from lipoate: step 1/2. It functions in the pathway protein modification; protein lipoylation via exogenous pathway; protein N(6)-(lipoyl)lysine from lipoate: step 2/2. In terms of biological role, catalyzes both the ATP-dependent activation of exogenously supplied lipoate to lipoyl-AMP and the transfer of the activated lipoyl onto the lipoyl domains of lipoate-dependent enzymes. This Escherichia coli O139:H28 (strain E24377A / ETEC) protein is Lipoate-protein ligase A.